A 338-amino-acid chain; its full sequence is DNA-directed RNA polymerase subunit alpha (338 aa).

The tract at residues 1–225 (MLISQRPTIT…ELFGLARELN (225 aa)) is alpha N-terminal domain (alpha-NTD). Positions 242 to 338 (YIAAYSMPIE…YIDVEAEDSE (97 aa)) are alpha C-terminal domain (alpha-CTD). The interval 319-338 (LEGYDAETGGYIDVEAEDSE) is disordered.

Belongs to the RNA polymerase alpha chain family. In terms of assembly, homodimer. The RNAP catalytic core consists of 2 alpha, 1 beta, 1 beta' and 1 omega subunit. When a sigma factor is associated with the core the holoenzyme is formed, which can initiate transcription.

The catalysed reaction is RNA(n) + a ribonucleoside 5'-triphosphate = RNA(n+1) + diphosphate. DNA-dependent RNA polymerase catalyzes the transcription of DNA into RNA using the four ribonucleoside triphosphates as substrates. The polypeptide is DNA-directed RNA polymerase subunit alpha (Corynebacterium glutamicum (strain ATCC 13032 / DSM 20300 / JCM 1318 / BCRC 11384 / CCUG 27702 / LMG 3730 / NBRC 12168 / NCIMB 10025 / NRRL B-2784 / 534)).